A 210-amino-acid chain; its full sequence is Ribosomal RNA small subunit methyltransferase G (210 aa).

Residues G74, F79, 127-128, and R143 contribute to the S-adenosyl-L-methionine site; that span reads IE.

It belongs to the methyltransferase superfamily. RNA methyltransferase RsmG family.

Its subcellular location is the cytoplasm. It catalyses the reaction guanosine(527) in 16S rRNA + S-adenosyl-L-methionine = N(7)-methylguanosine(527) in 16S rRNA + S-adenosyl-L-homocysteine. Its function is as follows. Specifically methylates the N7 position of guanine in position 527 of 16S rRNA. The protein is Ribosomal RNA small subunit methyltransferase G of Chelativorans sp. (strain BNC1).